Consider the following 524-residue polypeptide: Cytokinin dehydrogenase 4 (524 aa).

The N-terminal stretch at Met-1 to Ser-26 is a signal peptide. 2 N-linked (GlcNAc...) asparagine glycosylation sites follow: Asn-39 and Asn-58. The FAD-binding PCMH-type domain maps to Thr-60 to Ala-249. FAD-binding residues include Ala-104, Gly-106, and Gly-108. The residue at position 109 (His-109) is a Pros-8alpha-FAD histidine. Positions 110 and 114 each coordinate FAD. Asn-124 carries N-linked (GlcNAc...) asparagine glycosylation. FAD-binding residues include Asp-173, Ser-178, Ser-184, Ile-188, and Ile-239. N-linked (GlcNAc...) asparagine glycosylation is present at Asn-411. The FAD site is built by Tyr-482, Ser-517, and Gln-520.

Belongs to the oxygen-dependent FAD-linked oxidoreductase family. FAD serves as cofactor. As to expression, expressed in trichomes and in developing stomata of young growing leaves. Strong expression in stipules and in the root cap, but not detected in the root meristem.

It is found in the secreted. The protein resides in the extracellular space. It carries out the reaction N(6)-dimethylallyladenine + A + H2O = 3-methyl-2-butenal + adenine + AH2. Functionally, catalyzes the oxidation of cytokinins, a family of N(6)-substituted adenine derivatives that are plant hormones, where the substituent is an isopentenyl group. This chain is Cytokinin dehydrogenase 4 (CKX4), found in Arabidopsis thaliana (Mouse-ear cress).